Consider the following 217-residue polypeptide: ATP-dependent Clp protease proteolytic subunit 2 (217 aa).

The active-site Nucleophile is Ser113. His138 is a catalytic residue.

It belongs to the peptidase S14 family. As to quaternary structure, fourteen ClpP subunits assemble into 2 heptameric rings which stack back to back to give a disk-like structure with a central cavity, resembling the structure of eukaryotic proteasomes.

It localises to the cytoplasm. It catalyses the reaction Hydrolysis of proteins to small peptides in the presence of ATP and magnesium. alpha-casein is the usual test substrate. In the absence of ATP, only oligopeptides shorter than five residues are hydrolyzed (such as succinyl-Leu-Tyr-|-NHMec, and Leu-Tyr-Leu-|-Tyr-Trp, in which cleavage of the -Tyr-|-Leu- and -Tyr-|-Trp bonds also occurs).. In terms of biological role, cleaves peptides in various proteins in a process that requires ATP hydrolysis. Has a chymotrypsin-like activity. Plays a major role in the degradation of misfolded proteins. The polypeptide is ATP-dependent Clp protease proteolytic subunit 2 (Frankia casuarinae (strain DSM 45818 / CECT 9043 / HFP020203 / CcI3)).